The chain runs to 499 residues: Heparin cofactor 2 (499 aa).

The first 19 residues, 1-19, serve as a signal peptide directing secretion; sequence MKHSLNALLIFLIITSAWG. A Phosphoserine; by FAM20C modification is found at serine 37. Residue asparagine 49 is glycosylated (N-linked (GlcNAc...) (complex) asparagine). The segment at 68–79 is chemotactic activity; sequence DWIPEGEEDDDY. Tandem repeats lie at residues 73 to 83 and 87 to 97. The tract at residues 73 to 97 is 2 X 11 AA approximate repeats, Asp/Glu-rich (acidic) (hirudin-like); the sequence is GEEDDDYLDLEKIFSEDDDYIDIVD. 2 positions are modified to sulfotyrosine: tyrosine 79 and tyrosine 92. Asparagine 188 carries N-linked (GlcNAc...) asparagine glycosylation. The glycosaminoglycan-binding site stretch occupies residues 192–212; sequence KYEITTIHNLFRKLTHRLFRR. N-linked (GlcNAc...) asparagine glycosylation is present at asparagine 387.

The protein belongs to the serpin family. In terms of processing, phosphorylated by FAM20C in the extracellular medium. In terms of tissue distribution, expressed predominantly in liver. Also present in plasma. Expressed in plasma (at protein level). Expressed in liver.

Functionally, thrombin inhibitor activated by the glycosaminoglycans, heparin or dermatan sulfate. In the presence of the latter, HC-II becomes the predominant thrombin inhibitor in place of antithrombin III (AT-III). Also inhibits chymotrypsin, but in a glycosaminoglycan-independent manner. Peptides at the N-terminal of HC-II have chemotactic activity for both monocytes and neutrophils. In terms of biological role, shows negligible inhibition, in vitro, of thrombin and tPA and no inhibition of factor Xa, in vitro. The protein is Heparin cofactor 2 (SERPIND1) of Homo sapiens (Human).